Consider the following 89-residue polypeptide: MQTVLIALLRFYKLAVSPLLGSRCRFYPSCSDYAREAIQYHGAARGTYLAARRLCRCHPFSAGGVDLVPPPNSDARNAPHEAEASSHRL.

The tract at residues Val68–Leu89 is disordered. Residues Asn77–Leu89 show a composition bias toward basic and acidic residues.

The protein belongs to the UPF0161 family.

It localises to the cell inner membrane. Its function is as follows. Could be involved in insertion of integral membrane proteins into the membrane. This chain is Putative membrane protein insertion efficiency factor, found in Burkholderia mallei (strain SAVP1).